The sequence spans 254 residues: Acetylglutamate kinase (254 aa).

Substrate-binding positions include 40-41 (GG), Arg62, and Asn154. ATP-binding positions include 177–182 (DVSGIL) and 205–207 (IIT).

This sequence belongs to the acetylglutamate kinase family. ArgB subfamily. Homodimer.

The protein resides in the cytoplasm. It carries out the reaction N-acetyl-L-glutamate + ATP = N-acetyl-L-glutamyl 5-phosphate + ADP. It participates in amino-acid biosynthesis; L-arginine biosynthesis; N(2)-acetyl-L-ornithine from L-glutamate: step 2/4. Its function is as follows. Catalyzes the ATP-dependent phosphorylation of N-acetyl-L-glutamate. The protein is Acetylglutamate kinase of Yersinia enterocolitica serotype O:8 / biotype 1B (strain NCTC 13174 / 8081).